Reading from the N-terminus, the 244-residue chain is MAFTFKQFHIDDFGCGMPVSTDAVILGAWAPLSDAQNILDIGAGSGLLSLMATQRSNAKVTSIELDDTAVNACQKNFEASPWTSRLTVKHSSVQEFSKQHQESEESLFDHIICNPPYFKGGTQSQNRLRAQARHTDTLDFCALLEAIGSLLAPNGTASLILPSQSMSEFGLVLADSSLEFSQVTDISDSQRKTPHRHLFTLCHKSTDASAKPNEGATEHFCIKELDGSYTEEMKLLITGFYLKY.

This sequence belongs to the methyltransferase superfamily. tRNA (adenine-N(6)-)-methyltransferase family.

The protein localises to the cytoplasm. It carries out the reaction adenosine(37) in tRNA1(Val) + S-adenosyl-L-methionine = N(6)-methyladenosine(37) in tRNA1(Val) + S-adenosyl-L-homocysteine + H(+). Specifically methylates the adenine in position 37 of tRNA(1)(Val) (anticodon cmo5UAC). This is tRNA1(Val) (adenine(37)-N6)-methyltransferase from Shewanella sediminis (strain HAW-EB3).